The primary structure comprises 406 residues: Imidazolonepropionase (406 aa).

His72 and His74 together coordinate Fe(3+). The Zn(2+) site is built by His72 and His74. 3 residues coordinate 4-imidazolone-5-propanoate: Arg81, Tyr144, and His177. Tyr144 provides a ligand contact to N-formimidoyl-L-glutamate. His242 is a binding site for Fe(3+). Residue His242 coordinates Zn(2+). Gln245 is a 4-imidazolone-5-propanoate binding site. A Fe(3+)-binding site is contributed by Asp317. Residue Asp317 participates in Zn(2+) binding. Asn319 and Gly321 together coordinate N-formimidoyl-L-glutamate. A 4-imidazolone-5-propanoate-binding site is contributed by Thr322.

It belongs to the metallo-dependent hydrolases superfamily. HutI family. Zn(2+) serves as cofactor. Fe(3+) is required as a cofactor.

It localises to the cytoplasm. The catalysed reaction is 4-imidazolone-5-propanoate + H2O = N-formimidoyl-L-glutamate. Its pathway is amino-acid degradation; L-histidine degradation into L-glutamate; N-formimidoyl-L-glutamate from L-histidine: step 3/3. Catalyzes the hydrolytic cleavage of the carbon-nitrogen bond in imidazolone-5-propanoate to yield N-formimidoyl-L-glutamate. It is the third step in the universal histidine degradation pathway. In Yersinia enterocolitica serotype O:8 / biotype 1B (strain NCTC 13174 / 8081), this protein is Imidazolonepropionase.